The chain runs to 91 residues: DNA-binding protein HU (91 aa).

Belongs to the bacterial histone-like protein family.

Histone-like DNA-binding protein which is capable of wrapping DNA to stabilize it, and thus to prevent its denaturation under extreme environmental conditions. Also seems to act as a fortuitous virulence factor in delayed sequelae by binding to heparan sulfate-proteoglycans in the extracellular matrix of target organs and acting as a nidus for in situ immune complex formation. This Streptococcus mutans serotype c (strain ATCC 700610 / UA159) protein is DNA-binding protein HU (hup).